Reading from the N-terminus, the 187-residue chain is Elongation factor P (187 aa).

It belongs to the elongation factor P family.

The protein localises to the cytoplasm. Its pathway is protein biosynthesis; polypeptide chain elongation. Involved in peptide bond synthesis. Stimulates efficient translation and peptide-bond synthesis on native or reconstituted 70S ribosomes in vitro. Probably functions indirectly by altering the affinity of the ribosome for aminoacyl-tRNA, thus increasing their reactivity as acceptors for peptidyl transferase. The sequence is that of Elongation factor P from Gloeobacter violaceus (strain ATCC 29082 / PCC 7421).